Reading from the N-terminus, the 394-residue chain is Phosphoglycerate kinase (394 aa).

Residues 21–23 (DFN), arginine 36, 59–62 (HLGR), arginine 118, and arginine 151 contribute to the substrate site. Serine 183 is subject to Phosphoserine. Residues lysine 201 and glycine 292 each contribute to the ATP site. A Phosphothreonine modification is found at threonine 299. Residues glutamate 323 and 350–353 (GGDS) contribute to the ATP site.

It belongs to the phosphoglycerate kinase family. As to quaternary structure, monomer.

The protein resides in the cytoplasm. It catalyses the reaction (2R)-3-phosphoglycerate + ATP = (2R)-3-phospho-glyceroyl phosphate + ADP. It functions in the pathway carbohydrate degradation; glycolysis; pyruvate from D-glyceraldehyde 3-phosphate: step 2/5. The chain is Phosphoglycerate kinase from Bacillus cereus (strain Q1).